The chain runs to 232 residues: Orotidine 5'-phosphate decarboxylase (232 aa).

Substrate-binding positions include aspartate 11, lysine 33, 60 to 69 (DLKLYDIPNT), threonine 119, arginine 180, glutamine 189, glycine 209, and arginine 210. The active-site Proton donor is the lysine 62.

It belongs to the OMP decarboxylase family. Type 1 subfamily. In terms of assembly, homodimer.

The enzyme catalyses orotidine 5'-phosphate + H(+) = UMP + CO2. It participates in pyrimidine metabolism; UMP biosynthesis via de novo pathway; UMP from orotate: step 2/2. Its function is as follows. Catalyzes the decarboxylation of orotidine 5'-monophosphate (OMP) to uridine 5'-monophosphate (UMP). The chain is Orotidine 5'-phosphate decarboxylase from Wigglesworthia glossinidia brevipalpis.